Here is a 359-residue protein sequence, read N- to C-terminus: MEKIFQNVEIKPLLIDFSNPFIKNAAKKLFQLEEQLPLVPVNVVMDFKGINRAAVHGLSRVLQDEIPNYMLDIKPGGYKIEDSTDLFMTEQFIRNRINFIPIYAENESLVFALRSLNNSCEVKTIYTRDLIQVAGPKLKYPIFNPTFEIGFLQPGKSLIIEDIYIKKGIGRKHAAFNLAVKTHFSHLDIEQYPTDKKEYMALSGYKQSSMTSDPRHHRLGLCFPAVPMPRINKAVRTYLKNACRVIIGRIQSIQKIYENFEEPQPELVLFSMDEEKTKAIITIKDETHTIGNLLKTCIYEMIPDISFVGYQCVPHKQEMVLTIIHKASQEDLITLLEKSIQNIIQMFQTLEKNIDELIA.

This sequence in the N-terminal section; belongs to the archaeal RpoD/eukaryotic RPB3 RNA polymerase subunit family. It in the C-terminal section; belongs to the archaeal RpoL/eukaryotic RPB11/RPC19 RNA polymerase subunit family. Part of the viral DNA-directed RNA polymerase that consists of 8 polII-like subunits (RPB1, RPB2, RPB3, RPB5, RPB6, RPB7, RPB9, RPB10), a capping enzyme and a termination factor.

The protein localises to the host cytoplasm. It localises to the virion. Its function is as follows. Component of the DNA-directed RNA polymerase (RNAP) that catalyzes the transcription in the cytoplasm of viral DNA into RNA using the four ribonucleoside triphosphates as substrates. The protein is DNA-directed RNA polymerase RPB3-11 homolog of Ornithodoros (relapsing fever ticks).